A 445-amino-acid polypeptide reads, in one-letter code: Probable cytosol aminopeptidase (445 aa).

Mn(2+) is bound by residues lysine 217 and aspartate 222. Lysine 229 is a catalytic residue. Mn(2+) contacts are provided by aspartate 240, aspartate 299, and glutamate 301. Arginine 303 is a catalytic residue.

Belongs to the peptidase M17 family. Requires Mn(2+) as cofactor.

Its subcellular location is the cytoplasm. It carries out the reaction Release of an N-terminal amino acid, Xaa-|-Yaa-, in which Xaa is preferably Leu, but may be other amino acids including Pro although not Arg or Lys, and Yaa may be Pro. Amino acid amides and methyl esters are also readily hydrolyzed, but rates on arylamides are exceedingly low.. The catalysed reaction is Release of an N-terminal amino acid, preferentially leucine, but not glutamic or aspartic acids.. Its function is as follows. Presumably involved in the processing and regular turnover of intracellular proteins. Catalyzes the removal of unsubstituted N-terminal amino acids from various peptides. The polypeptide is Probable cytosol aminopeptidase (pepA) (Mycoplasma pneumoniae (strain ATCC 29342 / M129 / Subtype 1) (Mycoplasmoides pneumoniae)).